The following is a 228-amino-acid chain: Large ribosomal subunit protein uL4 (228 aa).

Disordered regions lie at residues 45–102 (GRQG…SQRT) and 208–228 (PAKGKTAKAAATSGEAEEANQ). The span at 208–221 (PAKGKTAKAAATSG) shows a compositional bias: low complexity.

It belongs to the universal ribosomal protein uL4 family. Part of the 50S ribosomal subunit.

Its function is as follows. One of the primary rRNA binding proteins, this protein initially binds near the 5'-end of the 23S rRNA. It is important during the early stages of 50S assembly. It makes multiple contacts with different domains of the 23S rRNA in the assembled 50S subunit and ribosome. Functionally, forms part of the polypeptide exit tunnel. The protein is Large ribosomal subunit protein uL4 of Saccharopolyspora erythraea (strain ATCC 11635 / DSM 40517 / JCM 4748 / NBRC 13426 / NCIMB 8594 / NRRL 2338).